The following is a 208-amino-acid chain: Uracil phosphoribosyltransferase (208 aa).

Residues R78, R103, and 130-138 (DPMLATGGS) each bind 5-phospho-alpha-D-ribose 1-diphosphate. Uracil is bound by residues I193 and 198–200 (GDA). D199 contributes to the 5-phospho-alpha-D-ribose 1-diphosphate binding site.

It belongs to the UPRTase family. The cofactor is Mg(2+).

The enzyme catalyses UMP + diphosphate = 5-phospho-alpha-D-ribose 1-diphosphate + uracil. The protein operates within pyrimidine metabolism; UMP biosynthesis via salvage pathway; UMP from uracil: step 1/1. With respect to regulation, allosterically activated by GTP. In terms of biological role, catalyzes the conversion of uracil and 5-phospho-alpha-D-ribose 1-diphosphate (PRPP) to UMP and diphosphate. The polypeptide is Uracil phosphoribosyltransferase (Colwellia psychrerythraea (strain 34H / ATCC BAA-681) (Vibrio psychroerythus)).